Consider the following 1107-residue polypeptide: Polyphosphatidylinositol phosphatase INP53 (1107 aa).

One can recognise an SAC domain in the interval 142-482 (LKKLLSNGSF…GDQISQIYTG (341 aa)). Residue S497 is modified to Phosphoserine. Residues 926 to 1107 (TASSVASSSP…LDSWQPLTPK (182 aa)) are disordered. The segment covering 927-942 (ASSVASSSPVSSASAS) has biased composition (low complexity). The span at 943–956 (LQPVRTQNSSQSRT) shows a compositional bias: polar residues. S986 carries the phosphoserine modification. Polar residues-rich tracts occupy residues 987 to 1005 (PTPQ…NIQE), 1020 to 1038 (FSQN…SPMS), 1045 to 1063 (NSAS…QTPT), and 1097 to 1107 (TLDSWQPLTPK). At S1035 the chain carries Phosphoserine. T1105 carries the post-translational modification Phosphothreonine.

Belongs to the synaptojanin family. This sequence in the central section; belongs to the inositol 1,4,5-trisphosphate 5-phosphatase family. In terms of assembly, interacts (via SAC domain) with BSP1; the interaction is direct. Interacts with CHC1.

Its subcellular location is the cytoplasm. The enzyme catalyses a 1,2-diacyl-sn-glycero-3-phospho-(1D-myo-inositol-4,5-bisphosphate) + H2O = a 1,2-diacyl-sn-glycero-3-phospho-(1D-myo-inositol 4-phosphate) + phosphate. Its function is as follows. Dephosphorylates a number of phosphatidylinositols (PIs) like phosphatidylinositol 4,5-bisphosphate (PtdIns(4,5)P2), but also phosphatidylinositol 3-phosphate (PtdIns(3)P), phosphatidylinositol 4-phosphate (PtdIns(4)P), and phosphatidylinositol 3,5-bisphosphate (PtdIns(3,5)P2). Controls the cellular levels and subcellular distribution of phosphatidylinositol 3-phosphate and phosphatidylinositol 4,5-bisphosphate. Plays an essential role in a TGN (trans Golgi network)-to-early endosome pathway. Involved in clathrin-mediated protein sorting at the TGN. The polypeptide is Polyphosphatidylinositol phosphatase INP53 (INP53) (Saccharomyces cerevisiae (strain ATCC 204508 / S288c) (Baker's yeast)).